Consider the following 188-residue polypeptide: Elongation factor P (188 aa).

N6-(3,6-diaminohexanoyl)-5-hydroxylysine is present on lysine 34.

This sequence belongs to the elongation factor P family. May be beta-lysylated on the epsilon-amino group of Lys-34 by the combined action of EpmA and EpmB, and then hydroxylated on the C5 position of the same residue by EpmC (if this protein is present). Lysylation is critical for the stimulatory effect of EF-P on peptide-bond formation. The lysylation moiety may extend toward the peptidyltransferase center and stabilize the terminal 3-CCA end of the tRNA. Hydroxylation of the C5 position on Lys-34 may allow additional potential stabilizing hydrogen-bond interactions with the P-tRNA.

It localises to the cytoplasm. The protein operates within protein biosynthesis; polypeptide chain elongation. Functionally, involved in peptide bond synthesis. Alleviates ribosome stalling that occurs when 3 or more consecutive Pro residues or the sequence PPG is present in a protein, possibly by augmenting the peptidyl transferase activity of the ribosome. Modification of Lys-34 is required for alleviation. The polypeptide is Elongation factor P (Hamiltonella defensa subsp. Acyrthosiphon pisum (strain 5AT)).